The chain runs to 340 residues: Beta-D-galactofuranosidase xynD (340 aa).

Positions 1–24 (MKHHNYYPSTCLSILPFLLPLTMS) are cleaved as a signal peptide. D51 functions as the Proton acceptor in the catalytic mechanism. N-linked (GlcNAc...) asparagine glycans are attached at residues N96 and N165. E222 acts as the Proton donor in catalysis. N-linked (GlcNAc...) asparagine glycosylation is found at N302 and N328.

Belongs to the glycosyl hydrolase 43 family.

It is found in the secreted. It participates in glycan degradation. Glycoside hydrolase family 43 beta-D-galactofuranosidase involved in the degradation of beta-galactofuranoside (Galf)-containing glycans such as galactomannan or O-glycans. Is not active on beta-1,5- or beta-1,6-linked beta-D-galactofuranose (Galf) residues. This Aspergillus niger (strain ATCC MYA-4892 / CBS 513.88 / FGSC A1513) protein is Beta-D-galactofuranosidase xynD.